A 1201-amino-acid chain; its full sequence is Transcription-repair-coupling factor (1201 aa).

The segment at 1-27 (MRLLITLGPSGSTHGHSLHTDAGRRRG) is disordered. The region spanning 670-831 (DMQKPEPMDR…MSGVRDMSII (162 aa)) is the Helicase ATP-binding domain. 683-690 (GDVGYGKT) is an ATP binding site. The DEEQ box signature appears at 784–787 (DEEQ). The region spanning 852-1006 (VVKEAIEREV…GFSIASHDLE (155 aa)) is the Helicase C-terminal domain.

The protein in the N-terminal section; belongs to the UvrB family. In the C-terminal section; belongs to the helicase family. RecG subfamily.

Its subcellular location is the cytoplasm. Functionally, couples transcription and DNA repair by recognizing RNA polymerase (RNAP) stalled at DNA lesions. Mediates ATP-dependent release of RNAP and its truncated transcript from the DNA, and recruitment of nucleotide excision repair machinery to the damaged site. In Myxococcus xanthus, this protein is Transcription-repair-coupling factor.